Reading from the N-terminus, the 435-residue chain is uncharacterized protein (435 aa).

WD repeat units follow at residues 105–149 (DLEY…GIDS), 164–204 (HNNA…SKTQ), and 207–247 (AHDK…HSTI). Serine 266 is modified (phosphoserine). The WD 4 repeat unit spans residues 313-353 (GHKGDVNAVKWMPGSKSKLATCGDDCVVSLWDLDQPVNPSP). The interval 352–371 (SPAPTLSVSGTTPGMTGSTS) is disordered. Residues 358–371 (SVSGTTPGMTGSTS) show a composition bias toward low complexity. Serine 388 is modified (phosphoserine).

It is found in the cytoplasm. The protein localises to the golgi apparatus. This is an uncharacterized protein from Schizosaccharomyces pombe (strain 972 / ATCC 24843) (Fission yeast).